A 132-amino-acid polypeptide reads, in one-letter code: ATP synthase epsilon chain (132 aa).

Belongs to the ATPase epsilon chain family. In terms of assembly, F-type ATPases have 2 components, CF(1) - the catalytic core - and CF(0) - the membrane proton channel. CF(1) has five subunits: alpha(3), beta(3), gamma(1), delta(1), epsilon(1). CF(0) has three main subunits: a, b and c.

It is found in the cell membrane. In terms of biological role, produces ATP from ADP in the presence of a proton gradient across the membrane. The protein is ATP synthase epsilon chain of Desulfitobacterium hafniense (strain Y51).